We begin with the raw amino-acid sequence, 546 residues long: CTP synthase (546 aa).

An amidoligase domain region spans residues 1–266; sequence MTTNYIFVTG…DDLVCTRFGI (266 aa). Serine 14 provides a ligand contact to CTP. A UTP-binding site is contributed by serine 14. Residues 15–20 and aspartate 72 each bind ATP; that span reads SLGKGI. The Mg(2+) site is built by aspartate 72 and glutamate 140. Residues 147 to 149, 187 to 192, and lysine 223 each bind CTP; these read DIE and KTKPTQ. UTP-binding positions include 187–192 and lysine 223; that span reads KTKPTQ. 239–241 serves as a coordination point for ATP; the sequence is KDV. One can recognise a Glutamine amidotransferase type-1 domain in the interval 291-542; sequence TIGMVGKYIE…VKAAGQYSRG (252 aa). L-glutamine is bound at residue glycine 352. Catalysis depends on cysteine 379, which acts as the Nucleophile; for glutamine hydrolysis. Residues 380-383, glutamate 403, and arginine 470 contribute to the L-glutamine site; that span reads LGMQ. Catalysis depends on residues histidine 515 and glutamate 517.

This sequence belongs to the CTP synthase family. Homotetramer.

The catalysed reaction is UTP + L-glutamine + ATP + H2O = CTP + L-glutamate + ADP + phosphate + 2 H(+). It catalyses the reaction L-glutamine + H2O = L-glutamate + NH4(+). It carries out the reaction UTP + NH4(+) + ATP = CTP + ADP + phosphate + 2 H(+). It participates in pyrimidine metabolism; CTP biosynthesis via de novo pathway; CTP from UDP: step 2/2. Its activity is regulated as follows. Allosterically activated by GTP, when glutamine is the substrate; GTP has no effect on the reaction when ammonia is the substrate. The allosteric effector GTP functions by stabilizing the protein conformation that binds the tetrahedral intermediate(s) formed during glutamine hydrolysis. Inhibited by the product CTP, via allosteric rather than competitive inhibition. Its function is as follows. Catalyzes the ATP-dependent amination of UTP to CTP with either L-glutamine or ammonia as the source of nitrogen. Regulates intracellular CTP levels through interactions with the four ribonucleotide triphosphates. The polypeptide is CTP synthase (Vibrio parahaemolyticus serotype O3:K6 (strain RIMD 2210633)).